The primary structure comprises 596 residues: NADH-quinone oxidoreductase subunit C/D (596 aa).

An NADH dehydrogenase I subunit C region spans residues 1 to 186 (MMNDNKYIHI…PAFTLTRKKE (186 aa)). Residues 210-596 (DFMFLNLGPN…IDFVMSDVDR (387 aa)) form an NADH dehydrogenase I subunit D region.

This sequence in the N-terminal section; belongs to the complex I 30 kDa subunit family. It in the C-terminal section; belongs to the complex I 49 kDa subunit family. As to quaternary structure, NDH-1 is composed of 13 different subunits. Subunits NuoB, CD, E, F, and G constitute the peripheral sector of the complex.

Its subcellular location is the cell inner membrane. It catalyses the reaction a quinone + NADH + 5 H(+)(in) = a quinol + NAD(+) + 4 H(+)(out). Its function is as follows. NDH-1 shuttles electrons from NADH, via FMN and iron-sulfur (Fe-S) centers, to quinones in the respiratory chain. The immediate electron acceptor for the enzyme in this species is believed to be ubiquinone. Couples the redox reaction to proton translocation (for every two electrons transferred, four hydrogen ions are translocated across the cytoplasmic membrane), and thus conserves the redox energy in a proton gradient. This is NADH-quinone oxidoreductase subunit C/D from Blochmanniella floridana.